Reading from the N-terminus, the 349-residue chain is tRNA pseudouridine synthase D (349 aa).

Phenylalanine 26 contacts substrate. Aspartate 79 acts as the Nucleophile in catalysis. Asparagine 128 serves as a coordination point for substrate. A TRUD domain is found at glycine 154–valine 303. Phenylalanine 329 contacts substrate.

It belongs to the pseudouridine synthase TruD family.

The enzyme catalyses uridine(13) in tRNA = pseudouridine(13) in tRNA. In terms of biological role, responsible for synthesis of pseudouridine from uracil-13 in transfer RNAs. This chain is tRNA pseudouridine synthase D, found in Erwinia tasmaniensis (strain DSM 17950 / CFBP 7177 / CIP 109463 / NCPPB 4357 / Et1/99).